A 408-amino-acid chain; its full sequence is LL-diaminopimelate aminotransferase (408 aa).

Substrate-binding residues include Y15 and G42. Pyridoxal 5'-phosphate-binding positions include Y72, 108-109 (SK), Y132, N187, Y218, and 246-248 (SFS). Substrate is bound by residues K109, Y132, and N187. K249 carries the N6-(pyridoxal phosphate)lysine modification. Pyridoxal 5'-phosphate contacts are provided by R257 and N292. 2 residues coordinate substrate: N292 and R388.

Belongs to the class-I pyridoxal-phosphate-dependent aminotransferase family. LL-diaminopimelate aminotransferase subfamily. Homodimer. It depends on pyridoxal 5'-phosphate as a cofactor.

It carries out the reaction (2S,6S)-2,6-diaminopimelate + 2-oxoglutarate = (S)-2,3,4,5-tetrahydrodipicolinate + L-glutamate + H2O + H(+). Its pathway is amino-acid biosynthesis; L-lysine biosynthesis via DAP pathway; LL-2,6-diaminopimelate from (S)-tetrahydrodipicolinate (aminotransferase route): step 1/1. Its function is as follows. Involved in the synthesis of meso-diaminopimelate (m-DAP or DL-DAP), required for both lysine and peptidoglycan biosynthesis. Catalyzes the direct conversion of tetrahydrodipicolinate to LL-diaminopimelate. In Prochlorococcus marinus (strain MIT 9303), this protein is LL-diaminopimelate aminotransferase.